We begin with the raw amino-acid sequence, 419 residues long: Adenylosuccinate synthetase 1 (419 aa).

A GTP-binding site is contributed by 11-17 (GDEGKGK). Catalysis depends on D12, which acts as the Proton acceptor. The Mg(2+) site is built by D12 and G39. Residues 12–15 (DEGK), 37–40 (NAGH), R138, Q220, and R298 contribute to the IMP site. H40 functions as the Proton donor in the catalytic mechanism. 294-300 (TVSKRPR) lines the substrate pocket. GTP contacts are provided by residues R300, 326-328 (NVD), and 407-409 (SYG).

The protein belongs to the adenylosuccinate synthetase family. As to quaternary structure, homodimer. It depends on Mg(2+) as a cofactor.

The protein resides in the cytoplasm. It catalyses the reaction IMP + L-aspartate + GTP = N(6)-(1,2-dicarboxyethyl)-AMP + GDP + phosphate + 2 H(+). The protein operates within purine metabolism; AMP biosynthesis via de novo pathway; AMP from IMP: step 1/2. Functionally, plays an important role in the de novo pathway of purine nucleotide biosynthesis. Catalyzes the first committed step in the biosynthesis of AMP from IMP. This is Adenylosuccinate synthetase 1 from Photorhabdus laumondii subsp. laumondii (strain DSM 15139 / CIP 105565 / TT01) (Photorhabdus luminescens subsp. laumondii).